We begin with the raw amino-acid sequence, 506 residues long: ATP synthase subunit alpha (506 aa).

Position 169–176 (169–176 (GDRGTGKT)) interacts with ATP.

It belongs to the ATPase alpha/beta chains family. F-type ATPases have 2 components, CF(1) - the catalytic core - and CF(0) - the membrane proton channel. CF(1) has five subunits: alpha(3), beta(3), gamma(1), delta(1), epsilon(1). CF(0) has three main subunits: a(1), b(2) and c(9-12). The alpha and beta chains form an alternating ring which encloses part of the gamma chain. CF(1) is attached to CF(0) by a central stalk formed by the gamma and epsilon chains, while a peripheral stalk is formed by the delta and b chains.

The protein resides in the cell membrane. The enzyme catalyses ATP + H2O + 4 H(+)(in) = ADP + phosphate + 5 H(+)(out). In terms of biological role, produces ATP from ADP in the presence of a proton gradient across the membrane. The alpha chain is a regulatory subunit. The sequence is that of ATP synthase subunit alpha from Symbiobacterium thermophilum (strain DSM 24528 / JCM 14929 / IAM 14863 / T).